A 259-amino-acid polypeptide reads, in one-letter code: Tubulin-specific chaperone C (259 aa).

Residues Pro112–Trp241 form the C-CAP/cofactor C-like domain.

Belongs to the TBCC family.

Its subcellular location is the cytoplasm. The protein localises to the cytoskeleton. Its function is as follows. Tubulin-folding protein; involved in the final step of the tubulin folding pathway. In Schizosaccharomyces pombe (strain 972 / ATCC 24843) (Fission yeast), this protein is Tubulin-specific chaperone C (cin2).